The chain runs to 170 residues: Pollen-specific protein C13 (170 aa).

Positions 1 to 27 (MASVPAPATTTAAVILCLCVVLSCAAA) are cleaved as a signal peptide. 3 cysteine pairs are disulfide-bonded: Cys-43–Cys-114, Cys-46–Cys-155, and Cys-67–Cys-102. N-linked (GlcNAc...) asparagine glycosylation occurs at Asn-53.

The protein belongs to the Ole e I family. Pollen.

In Zea mays (Maize), this protein is Pollen-specific protein C13 (MGS1).